Reading from the N-terminus, the 51-residue chain is Suberization-associated anionic peroxidase 1 (51 aa).

His30 contributes to the heme binding site. Thr31 contacts Ca(2+).

It belongs to the peroxidase family. Classical plant (class III) peroxidase subfamily. It depends on heme b as a cofactor. The cofactor is Ca(2+).

The protein resides in the secreted. The catalysed reaction is 2 a phenolic donor + H2O2 = 2 a phenolic radical donor + 2 H2O. Functionally, removal of H(2)O(2), oxidation of toxic reductants, biosynthesis and degradation of lignin, suberization, auxin catabolism, response to environmental stresses such as wounding, pathogen attack and oxidative stress. These functions might be dependent on each isozyme/isoform in each plant tissue. Its function is as follows. Suggested to catalyze the deposition of the aromatic residues of suberin on the cell wall and thus play a role in cell-suberization. The polypeptide is Suberization-associated anionic peroxidase 1 (Capsicum annuum (Capsicum pepper)).